The primary structure comprises 362 residues: Phosphoserine aminotransferase (362 aa).

Ser-9 and Arg-42 together coordinate L-glutamate. Pyridoxal 5'-phosphate contacts are provided by residues 76-77 (GR), Trp-102, Thr-153, Asp-174, and Gln-197. The residue at position 198 (Lys-198) is an N6-(pyridoxal phosphate)lysine. 239–240 (NT) serves as a coordination point for pyridoxal 5'-phosphate.

Belongs to the class-V pyridoxal-phosphate-dependent aminotransferase family. SerC subfamily. Homodimer. Pyridoxal 5'-phosphate is required as a cofactor.

It is found in the cytoplasm. The enzyme catalyses O-phospho-L-serine + 2-oxoglutarate = 3-phosphooxypyruvate + L-glutamate. The catalysed reaction is 4-(phosphooxy)-L-threonine + 2-oxoglutarate = (R)-3-hydroxy-2-oxo-4-phosphooxybutanoate + L-glutamate. The protein operates within amino-acid biosynthesis; L-serine biosynthesis; L-serine from 3-phospho-D-glycerate: step 2/3. It participates in cofactor biosynthesis; pyridoxine 5'-phosphate biosynthesis; pyridoxine 5'-phosphate from D-erythrose 4-phosphate: step 3/5. Catalyzes the reversible conversion of 3-phosphohydroxypyruvate to phosphoserine and of 3-hydroxy-2-oxo-4-phosphonooxybutanoate to phosphohydroxythreonine. Is involved in both pyridoxine and serine biosynthesis. The protein is Phosphoserine aminotransferase (serC) of Escherichia coli (strain K12).